Here is a 253-residue protein sequence, read N- to C-terminus: Ciliary microtubule associated protein 1B (253 aa).

An STPGR repeat occupies P182 to R207.

The protein belongs to the CIMAP family.

It is found in the cell projection. The protein resides in the cilium. The protein localises to the flagellum. The polypeptide is Ciliary microtubule associated protein 1B (Homo sapiens (Human)).